We begin with the raw amino-acid sequence, 545 residues long: Sulfite oxidase, mitochondrial (545 aa).

A mitochondrion-targeting transit peptide spans 1 to 79 (MLLLHRAVVL…YQDHRCRAAQ (79 aa)). The Cytochrome b5 heme-binding domain maps to 82–161 (THIYTKEEVS…LAQYKIGELN (80 aa)). His118 is a heme b binding site. Phosphoserine is present on Ser123. Positions 143, 145, and 147 each coordinate heme b. The hinge stretch occupies residues 165 to 174 (KVAPTVETSD). A moco domain region spans residues 175 to 401 (PYADDPVRHP…YSHWQRRDYK (227 aa)). Residues 215-219 (FTRNH), Cys264, Asp322, His361, Arg366, and 377-379 (HVK) contribute to the Mo-molybdopterin site. The segment at 402-538 (GFSPSVDWET…RGVLSNAWHR (137 aa)) is homodimerization.

As to quaternary structure, homodimer. It depends on heme b as a cofactor. Requires Mo-molybdopterin as cofactor.

It localises to the mitochondrion intermembrane space. It carries out the reaction sulfite + O2 + H2O = sulfate + H2O2. The protein operates within energy metabolism; sulfur metabolism. Catalyzes the oxidation of sulfite to sulfate, the terminal reaction in the oxidative degradation of sulfur-containing amino acids. This Homo sapiens (Human) protein is Sulfite oxidase, mitochondrial (SUOX).